A 241-amino-acid chain; its full sequence is 3-dehydroquinate dehydratase (241 aa).

Residues 35-37 and arginine 70 each bind 3-dehydroquinate; that span reads ELR. Catalysis depends on histidine 132, which acts as the Proton donor/acceptor. Catalysis depends on lysine 159, which acts as the Schiff-base intermediate with substrate. Positions 201 and 224 each coordinate 3-dehydroquinate.

The protein belongs to the type-I 3-dehydroquinase family. In terms of assembly, homodimer.

It carries out the reaction 3-dehydroquinate = 3-dehydroshikimate + H2O. The protein operates within metabolic intermediate biosynthesis; chorismate biosynthesis; chorismate from D-erythrose 4-phosphate and phosphoenolpyruvate: step 3/7. Functionally, involved in the third step of the chorismate pathway, which leads to the biosynthesis of aromatic amino acids. Catalyzes the cis-dehydration of 3-dehydroquinate (DHQ) and introduces the first double bond of the aromatic ring to yield 3-dehydroshikimate. This is 3-dehydroquinate dehydratase from Staphylococcus carnosus (strain TM300).